Consider the following 527-residue polypeptide: Fusicoccadiene C-8 hydroxylase (527 aa).

A helical membrane pass occupies residues 15–35; sequence GKPLLLFLILITLTYSLGIVF. Asn125 carries N-linked (GlcNAc...) asparagine glycosylation. Cys465 is a binding site for heme. Asn496 carries N-linked (GlcNAc...) asparagine glycosylation.

The protein belongs to the cytochrome P450 family. The cofactor is heme.

The protein resides in the membrane. It participates in mycotoxin biosynthesis. In terms of biological role, cytochrome P450 monooxygenase; part of the gene cluster that mediates the biosynthesis of the diterpene glucoside brassicicene C. In the first step of the brassicicene C biosynthesis, the bifunctional diterpene synthase bsc8 that possesses both prenyl transferase and terpene cyclase activity, converts isopentenyl diphosphate and dimethylallyl diphosphate into geranylgeranyl diphosphate (GGDP) that is further converted into fusicocca-2,10(14)-diene, the first precursor for brassicicene C. Fusicocca-2,10(14)-diene is then substrate of cytochrome P450 monooxygenase bsc1 for hydroxylation at the C-8 position. Oxidation at C-16 position to aldehyde is then catalyzed by the cytochrome P450 monooyxygenase bsc7, yielding fusicocca-2,10(14)-diene-8-beta,16-diol. Follows the isomerization of the double bond and reduction of aldehyde to alcohol catalyzed by the short-chain dehydrogenase/reductase bsc3 to yield the diol compound fusicocca-1,10(14)-diene-8 beta,16-diol. The next step is the oxidation at the C-3 position of fusicocca-2,10(14)-diene-8-beta,16-diol catalyzed by the alpha-ketoglutarate dependent dioxygenase bsc9, to produce a triol compound. Methylation of the hydroxy group at position 16 is performed by the methyltransferase bsc6. 16-O-methylation is followed by oxidation at the C-13 position to ketone and an alkyl shift of the methyl group leads to brassicicene C. Although the probable acetyltransferase bsc4 is included in the gene cluster, no acetylation reactions are necessary for brassicicene C biosynthesis. However, the fact that brassicicene E, which is a structurally related compound having an acetoxy group at position 12, was previously isolated from another strain of A.brassicicola suggests that the ATCC 96836 strain might also produce a small amount of brassicicene E. This Alternaria brassicicola (Dark leaf spot agent) protein is Fusicoccadiene C-8 hydroxylase.